Reading from the N-terminus, the 77-residue chain is Sec-independent protein translocase protein TatA 2 (77 aa).

The helical transmembrane segment at 2-22 (FPGGISMTELIIILAVILLLF) threads the bilayer. Residues 52 to 77 (KEVKAEDVKTEERKEEKKEEKEKVEA) form a disordered region.

It belongs to the TatA/E family. Forms a complex with TatC.

The protein resides in the cell inner membrane. In terms of biological role, part of the twin-arginine translocation (Tat) system that transports large folded proteins containing a characteristic twin-arginine motif in their signal peptide across membranes. TatA could form the protein-conducting channel of the Tat system. The sequence is that of Sec-independent protein translocase protein TatA 2 from Aquifex aeolicus (strain VF5).